The sequence spans 255 residues: Small ribosomal subunit protein uS2 (255 aa).

The segment at 233 to 255 (DFVAEEAASEESLEELAEIVEGK) is disordered.

The protein belongs to the universal ribosomal protein uS2 family.

This Lactococcus lactis subsp. cremoris (strain SK11) protein is Small ribosomal subunit protein uS2.